The chain runs to 459 residues: Putrescine aminotransferase (459 aa).

Residues 150–151 (GT) and Gln-274 each bind pyridoxal 5'-phosphate. An N6-(pyridoxal phosphate)lysine modification is found at Lys-300. Residue Thr-332 coordinates pyridoxal 5'-phosphate.

The protein belongs to the class-III pyridoxal-phosphate-dependent aminotransferase family. Putrescine aminotransferase subfamily. Pyridoxal 5'-phosphate is required as a cofactor.

The catalysed reaction is an alkane-alpha,omega-diamine + 2-oxoglutarate = an omega-aminoaldehyde + L-glutamate. It catalyses the reaction putrescine + 2-oxoglutarate = 1-pyrroline + L-glutamate + H2O. The enzyme catalyses cadaverine + 2-oxoglutarate = 5-aminopentanal + L-glutamate. It participates in amine and polyamine degradation; putrescine degradation; 4-aminobutanal from putrescine (transaminase route): step 1/1. Its function is as follows. Catalyzes the aminotransferase reaction from putrescine to 2-oxoglutarate, leading to glutamate and 4-aminobutanal, which spontaneously cyclizes to form 1-pyrroline. This is the first step in one of two pathways for putrescine degradation, where putrescine is converted into 4-aminobutanoate (gamma-aminobutyrate or GABA) via 4-aminobutanal. Also functions as a cadaverine transaminase in a a L-lysine degradation pathway to succinate that proceeds via cadaverine, glutarate and L-2-hydroxyglutarate. The sequence is that of Putrescine aminotransferase from Escherichia coli O7:K1 (strain IAI39 / ExPEC).